A 296-amino-acid polypeptide reads, in one-letter code: Stanniocalcin-2 (296 aa).

An N-terminal signal peptide occupies residues 1 to 24 (MCAERLGQFVTLALVFATLDPAQG). Positions 21–44 (PAQGTDSTNPPEGPQDRSSQQKGR) are disordered. Positions 24-44 (GTDSTNPPEGPQDRSSQQKGR) are enriched in polar residues. Residue asparagine 73 is glycosylated (N-linked (GlcNAc...) asparagine). The segment at 218–296 (PPTAAPEHQP…EQSEYSDIRR (79 aa)) is disordered. A compositionally biased stretch (basic and acidic residues) spans 240–258 (RDTDHHLTANRGAKGERGS). Residues 272–282 (GQSAQGPSGSS) show a composition bias toward low complexity.

Belongs to the stanniocalcin family. As to quaternary structure, homodimer; disulfide-linked. Found in a variety of tissues including skeletal muscle, small intestine, kidney, liver and brain.

Its subcellular location is the secreted. Has an anti-hypocalcemic action on calcium and phosphate homeostasis. This Mus musculus (Mouse) protein is Stanniocalcin-2 (Stc2).